The primary structure comprises 586 residues: Protein cereblon (586 aa).

2 disordered regions span residues 1-114 (MDDE…LPRW) and 158-194 (SQER…IDIG). Positions 14 to 37 (GRDEDVQLEDHSQAQGLQDRRVDA) are enriched in basic and acidic residues. Acidic residues predominate over residues 75 to 85 (MVEDGLQDDTA). Positions 86–96 (SEGSHPSSDMS) are enriched in polar residues. Residues 159–168 (QERRRSRTSE) are compositionally biased toward basic and acidic residues. Residues 170–179 (TSQEDVEQPE) are compositionally biased toward acidic residues. Over residues 180-190 (DPPPQQPPRPP) the composition is skewed to pro residues. The region spanning 226-452 (HMLIFLHQHI…LIKSTFTDES (227 aa)) is the Lon N-terminal domain. The CULT domain maps to 451–560 (ESLFFCRYCN…LAGSSVRIGK (110 aa)). Cys-456, Cys-459, Cys-525, and Cys-528 together coordinate Zn(2+).

Belongs to the CRBN family. In terms of assembly, likely a component of a DCX (DDB1-CUL4-X-box) protein ligase complex. May interact with pic/DDB1. In terms of processing, ubiquitinated.

It localises to the nucleus. The protein operates within protein modification; protein ubiquitination. Its function is as follows. Substrate recognition component of a DCX (DDB1-CUL4-X-box) E3 protein ligase complex that mediates the ubiquitination and subsequent proteasomal degradation of target proteins. Has an essential role in mediating growth by negatively regulating insulin signaling. It also has a role in maintaining presynaptic function in the neuromuscular junction synapses of third-instar larvae. This chain is Protein cereblon, found in Drosophila erecta (Fruit fly).